A 524-amino-acid polypeptide reads, in one-letter code: DEAD-box ATP-dependent RNA helicase CshA (524 aa).

Residues 1 to 29 (MKFNELNLSADLLAEIEKAGFVEASPIQE) carry the Q motif motif. Positions 32–202 (IPLALEGKDV…VQFMKAPEHV (171 aa)) constitute a Helicase ATP-binding domain. ATP is bound at residue 45–52 (AQTGTGKT). Positions 150-153 (DEAD) match the DEAD box motif. In terms of domain architecture, Helicase C-terminal spans 213–373 (LVDQYYIRVK…GLKPASVEES (161 aa)). The interval 440–524 (EKPLPFKPSG…GFVIRNKGDK (85 aa)) is disordered. Positions 463-498 (RRGDDRRERDRRGNGRRDEFKKGSRGNDRFDKEKRY) are enriched in basic and acidic residues.

This sequence belongs to the DEAD box helicase family. CshA subfamily. Oligomerizes, may be a member of the RNA degradosome.

It is found in the cytoplasm. The catalysed reaction is ATP + H2O = ADP + phosphate + H(+). Its function is as follows. DEAD-box RNA helicase possibly involved in RNA degradation. Unwinds dsRNA in both 5'- and 3'-directions, has RNA-dependent ATPase activity. This chain is DEAD-box ATP-dependent RNA helicase CshA, found in Streptococcus pneumoniae serotype 4 (strain ATCC BAA-334 / TIGR4).